The following is a 707-amino-acid chain: Polyribonucleotide nucleotidyltransferase (707 aa).

Residues D488 and D494 each contribute to the Mg(2+) site. The KH domain maps to 555-615 (PIIKVTKIDP…ENVDNAIALI (61 aa)). Residues 625–692 (GEILEGKITR…DLGRLQFKRV (68 aa)) form the S1 motif domain.

The protein belongs to the polyribonucleotide nucleotidyltransferase family. Requires Mg(2+) as cofactor.

Its subcellular location is the cytoplasm. It catalyses the reaction RNA(n+1) + phosphate = RNA(n) + a ribonucleoside 5'-diphosphate. Functionally, involved in mRNA degradation. Catalyzes the phosphorolysis of single-stranded polyribonucleotides processively in the 3'- to 5'-direction. In Thermotoga neapolitana (strain ATCC 49049 / DSM 4359 / NBRC 107923 / NS-E), this protein is Polyribonucleotide nucleotidyltransferase.